Here is a 463-residue protein sequence, read N- to C-terminus: Bifunctional protein HldE (463 aa).

A ribokinase region spans residues 1 to 315 (MKKILVIGDL…LILNQTHPKI (315 aa)). Residue 191-194 (NRAE) coordinates ATP. The active site involves D260. Residues 334-463 (FTNGCFDILH…IEKIKRTHND (130 aa)) are cytidylyltransferase.

This sequence in the N-terminal section; belongs to the carbohydrate kinase PfkB family. The protein in the C-terminal section; belongs to the cytidylyltransferase family. In terms of assembly, homodimer.

It catalyses the reaction D-glycero-beta-D-manno-heptose 7-phosphate + ATP = D-glycero-beta-D-manno-heptose 1,7-bisphosphate + ADP + H(+). The catalysed reaction is D-glycero-beta-D-manno-heptose 1-phosphate + ATP + H(+) = ADP-D-glycero-beta-D-manno-heptose + diphosphate. The protein operates within nucleotide-sugar biosynthesis; ADP-L-glycero-beta-D-manno-heptose biosynthesis; ADP-L-glycero-beta-D-manno-heptose from D-glycero-beta-D-manno-heptose 7-phosphate: step 1/4. Its pathway is nucleotide-sugar biosynthesis; ADP-L-glycero-beta-D-manno-heptose biosynthesis; ADP-L-glycero-beta-D-manno-heptose from D-glycero-beta-D-manno-heptose 7-phosphate: step 3/4. It functions in the pathway bacterial outer membrane biogenesis; LPS core biosynthesis. Its function is as follows. Catalyzes the phosphorylation of D-glycero-D-manno-heptose 7-phosphate at the C-1 position to selectively form D-glycero-beta-D-manno-heptose-1,7-bisphosphate. Functionally, catalyzes the ADP transfer from ATP to D-glycero-beta-D-manno-heptose 1-phosphate, yielding ADP-D-glycero-beta-D-manno-heptose. This chain is Bifunctional protein HldE, found in Helicobacter pylori (strain J99 / ATCC 700824) (Campylobacter pylori J99).